The following is a 214-amino-acid chain: Phosphoribosylglycinamide formyltransferase (214 aa).

12–14 is a binding site for N(1)-(5-phospho-beta-D-ribosyl)glycinamide; that stretch reads GSN. Residues 105–108 and Asn-123 contribute to the (6R)-10-formyltetrahydrofolate site; that span reads LLIL. The active-site Proton donor is His-125. Asp-167 serves as a coordination point for (6R)-10-formyltetrahydrofolate. Glu-197 contacts N(1)-(5-phospho-beta-D-ribosyl)glycinamide.

Belongs to the GART family.

It carries out the reaction N(1)-(5-phospho-beta-D-ribosyl)glycinamide + (6R)-10-formyltetrahydrofolate = N(2)-formyl-N(1)-(5-phospho-beta-D-ribosyl)glycinamide + (6S)-5,6,7,8-tetrahydrofolate + H(+). Its pathway is purine metabolism; IMP biosynthesis via de novo pathway; N(2)-formyl-N(1)-(5-phospho-D-ribosyl)glycinamide from N(1)-(5-phospho-D-ribosyl)glycinamide (10-formyl THF route): step 1/1. The protein is Phosphoribosylglycinamide formyltransferase of Saccharomyces cerevisiae (strain ATCC 204508 / S288c) (Baker's yeast).